Consider the following 360-residue polypeptide: GTPase Obg (360 aa).

In terms of domain architecture, Obg spans 1–156; the sequence is MFVDSVEIII…KCVRLELKLI (156 aa). Residues 157 to 360 form the OBG-type G domain; the sequence is ADIGLVGFPN…LKFVLLEALP (204 aa). Residues 163-170, 188-192, 210-213, 279-282, and 341-343 contribute to the GTP site; these read GFPNAGKS, FTTLV, DIPG, NKCD, and SAV. Ser170 and Thr190 together coordinate Mg(2+).

Belongs to the TRAFAC class OBG-HflX-like GTPase superfamily. OBG GTPase family. As to quaternary structure, monomer. Mg(2+) serves as cofactor.

The protein resides in the cytoplasm. In terms of biological role, an essential GTPase which binds GTP, GDP and possibly (p)ppGpp with moderate affinity, with high nucleotide exchange rates and a fairly low GTP hydrolysis rate. Plays a role in control of the cell cycle, stress response, ribosome biogenesis and in those bacteria that undergo differentiation, in morphogenesis control. The polypeptide is GTPase Obg (Helicobacter pylori (strain ATCC 700392 / 26695) (Campylobacter pylori)).